The sequence spans 208 residues: Small ribosomal subunit protein eS8 (208 aa).

Belongs to the eukaryotic ribosomal protein eS8 family. In terms of assembly, component of the small ribosomal subunit. Identified in a IGF2BP1-dependent mRNP granule complex containing untranslated mRNAs. Part of the small subunit (SSU) processome, composed of more than 70 proteins and the RNA chaperone small nucleolar RNA (snoRNA) U3.

Its subcellular location is the cytoplasm. It is found in the membrane. The protein localises to the nucleus. It localises to the nucleolus. Its function is as follows. Component of the small ribosomal subunit. The ribosome is a large ribonucleoprotein complex responsible for the synthesis of proteins in the cell. Part of the small subunit (SSU) processome, first precursor of the small eukaryotic ribosomal subunit. During the assembly of the SSU processome in the nucleolus, many ribosome biogenesis factors, an RNA chaperone and ribosomal proteins associate with the nascent pre-rRNA and work in concert to generate RNA folding, modifications, rearrangements and cleavage as well as targeted degradation of pre-ribosomal RNA by the RNA exosome. The chain is Small ribosomal subunit protein eS8 (rps-8) from Caenorhabditis elegans.